The following is a 376-amino-acid chain: Partitioning defective 6 homolog gamma (376 aa).

A PB1 domain is found at 18–98 (AVEVKSKFGA…PLLRVFIQKR (81 aa)). Residues 127–254 (RRRAHLDIGL…VTVKPANQRN (128 aa)) form an interaction with PARD3 and CDC42 region. The Pseudo-CRIB domain occupies 134–151 (IGLPRDFRPVSSIIDVDL). Residues 158-251 (RVRLHRHGCE…NLIVTVKPAN (94 aa)) form the PDZ domain. The segment at 356 to 376 (PRHSLALPPGGVEEHGPAVTL) is disordered. The segment covering 367 to 376 (VEEHGPAVTL) has biased composition (basic and acidic residues).

Belongs to the PAR6 family. In terms of assembly, interacts with PARD3. Interacts with GTP-bound forms of CDC42, RHOQ/TC10 and RAC1. Interacts with the N-terminal part of PRKCI and PRKCZ. In terms of tissue distribution, widely expressed, with a higher expression in fetal and adult kidney.

It localises to the cytoplasm. The protein resides in the cell membrane. It is found in the cell junction. Its subcellular location is the tight junction. Functionally, adapter protein involved in asymmetrical cell division and cell polarization processes. May play a role in the formation of epithelial tight junctions. The PARD6-PARD3 complex links GTP-bound Rho small GTPases to atypical protein kinase C proteins. This is Partitioning defective 6 homolog gamma (PARD6G) from Homo sapiens (Human).